The primary structure comprises 630 residues: Ankyrin repeat protein OPG025 (630 aa).

6 ANK repeats span residues 36-69 (DGETPLKAYVTKKNNNIKNDVVILLLSSVDYKNI), 70-100 (NDFDIFEYLCSDNIDIDLLKLLISKGIEINS), 103-134 (NGINIVEKYATTSNPNIDVFKLLLDKGIPTCS), 174-210 (MGKTVLYYYIITRSQDGYVTSLDVINYLISHENEMCH), 338-367 (KHINKYFKRFDNRDPKVVEYILKNGNVVVN), and 408-437 (HGRSILYYCIESHSVALIEWLIDNGADINI).

This sequence belongs to the orthopoxvirus OPG025 family. As to quaternary structure, interacts with components of host SCF complex CUL1 and SKP1 and components of the cullin deneddylation/COP9 signalosome complex subunits COPS7A and COPS7B.

Functionally, plays a role in the inhibition of host immune repsonse by counteracting the action of interferons on early events in the viral replication cycle. This Monkeypox virus protein is Ankyrin repeat protein OPG025 (OPG025).